Consider the following 559-residue polypeptide: Methionine--tRNA ligase (559 aa).

Positions 10–20 (PYINAVPHLGT) match the 'HIGH' region motif. Residues Cys141, Cys144, Cys154, and Cys157 each coordinate Zn(2+). A 'KMSKS' region motif is present at residues 331–335 (KFSKS). Lys334 lines the ATP pocket.

The protein belongs to the class-I aminoacyl-tRNA synthetase family. MetG type 1 subfamily. It depends on Zn(2+) as a cofactor.

It is found in the cytoplasm. The catalysed reaction is tRNA(Met) + L-methionine + ATP = L-methionyl-tRNA(Met) + AMP + diphosphate. In terms of biological role, is required not only for elongation of protein synthesis but also for the initiation of all mRNA translation through initiator tRNA(fMet) aminoacylation. The polypeptide is Methionine--tRNA ligase (Korarchaeum cryptofilum (strain OPF8)).